Here is a 333-residue protein sequence, read N- to C-terminus: Adenosine deaminase (333 aa).

Residues His-12 and His-14 each coordinate Zn(2+). Substrate-binding residues include His-14, Asp-16, and Gly-170. His-197 lines the Zn(2+) pocket. Glu-200 functions as the Proton donor in the catalytic mechanism. Asp-278 contributes to the Zn(2+) binding site. A substrate-binding site is contributed by Asp-279.

The protein belongs to the metallo-dependent hydrolases superfamily. Adenosine and AMP deaminases family. Adenosine deaminase subfamily. Zn(2+) serves as cofactor.

The enzyme catalyses adenosine + H2O + H(+) = inosine + NH4(+). It carries out the reaction 2'-deoxyadenosine + H2O + H(+) = 2'-deoxyinosine + NH4(+). Functionally, catalyzes the hydrolytic deamination of adenosine and 2-deoxyadenosine. This chain is Adenosine deaminase, found in Shigella dysenteriae serotype 1 (strain Sd197).